Here is a 530-residue protein sequence, read N- to C-terminus: Testis-expressed protein 44 (530 aa).

A compositionally biased stretch (acidic residues) spans 1-10 (MTAEPLEDPE). Disordered regions lie at residues 1–85 (MTAE…FIRT), 207–233 (ATSA…TSLL), 256–290 (ENNR…QPVL), and 305–384 (QTSV…SPDF). Polar residues-rich tracts occupy residues 11 to 26 (ASSS…SSDN), 222 to 233 (GQDNPEETTSLL), and 257 to 280 (NNRT…TLGN). Pro residues predominate over residues 365–381 (PPDPPDPGSPGGSPPHS). A Phosphoserine modification is found at S468.

The protein resides in the cytoplasm. The sequence is that of Testis-expressed protein 44 (Tex44) from Mus musculus (Mouse).